The chain runs to 106 residues: Cell division protein FtsB (106 aa).

Over 1-3 the chain is Cytoplasmic; sequence MGK. The helical transmembrane segment at 4-21 threads the bilayer; it reads LTLLLLVLLGWLQYSLWL. The Periplasmic segment spans residues 22-106; the sequence is GKNGIHDYVR…SRPSTPNNTQ (85 aa). The stretch at 29–70 forms a coiled coil; that stretch reads YVRVKNDVAMQERNNSKLKARNDQLSAEIDDLTGGQEAIEER.

It belongs to the FtsB family. Part of a complex composed of FtsB, FtsL and FtsQ.

It is found in the cell inner membrane. Functionally, essential cell division protein. May link together the upstream cell division proteins, which are predominantly cytoplasmic, with the downstream cell division proteins, which are predominantly periplasmic. This chain is Cell division protein FtsB, found in Photorhabdus laumondii subsp. laumondii (strain DSM 15139 / CIP 105565 / TT01) (Photorhabdus luminescens subsp. laumondii).